The sequence spans 230 residues: Probable tetraspanin tspD (230 aa).

At 1 to 20 (MVEYLPSTPRYLKVPLIILN) the chain is on the cytoplasmic side. Residues 21–41 (VILWLLGLVLVIIGGICVGFF) form a helical membrane-spanning segment. Over 42–65 (SRFKELQEVGGVSESIKSISVSLP) the chain is Extracellular. Residues 66-86 (AGVLSIGIFFMVLTVAGCIVA) traverse the membrane as a helical segment. Residues 87–90 (YKEK) lie on the Cytoplasmic side of the membrane. A helical transmembrane segment spans residues 91 to 111 (MVGLVFYTILMLVLLVVLIGI). The Extracellular portion of the chain corresponds to 112–200 (GGEALTYHNA…VNSKLYLVGS (89 aa)). N-linked (GlcNAc...) asparagine glycosylation is found at Asn133, Asn138, Asn163, and Asn179. A helical membrane pass occupies residues 201-221 (AGVAIGVIELVSLMFALFLIV). The Cytoplasmic segment spans residues 222-230 (RLYKSNSYR).

It belongs to the tetraspanin (TM4SF) family.

Its subcellular location is the membrane. The chain is Probable tetraspanin tspD (tspD) from Dictyostelium discoideum (Social amoeba).